Consider the following 364-residue polypeptide: Ribosomal RNA large subunit methyltransferase F (364 aa).

Positions 1–28 (MTNKRKSAKPLEPAKRTPKLRTKKSRDL) are disordered.

The protein belongs to the methyltransferase superfamily. METTL16/RlmF family.

Its subcellular location is the cytoplasm. The enzyme catalyses adenosine(1618) in 23S rRNA + S-adenosyl-L-methionine = N(6)-methyladenosine(1618) in 23S rRNA + S-adenosyl-L-homocysteine + H(+). Its function is as follows. Specifically methylates the adenine in position 1618 of 23S rRNA. The protein is Ribosomal RNA large subunit methyltransferase F of Vibrio vulnificus (strain YJ016).